The primary structure comprises 489 residues: Transcription factor TGAL11 (489 aa).

Residues 87–99 (AATATATARPPAT) show a composition bias toward low complexity. A disordered region spans residues 87–181 (AATATATARP…SDHRMTKTLD (95 aa)). Positions 121 to 139 (SNVTADTTDSESSSKNNGD) are enriched in polar residues. Low complexity predominate over residues 148–159 (ASQFDQIPQQQQ). The span at 171 to 181 (HSDHRMTKTLD) shows a compositional bias: basic and acidic residues. The bZIP domain occupies 181–225 (DPKIMRRLAQNREAARKSRLRKKAYIQQLESSKLRLAQMEQDLER). A basic motif region spans residues 183–203 (KIMRRLAQNREAARKSRLRKK). The leucine-zipper stretch occupies residues 209–223 (LESSKLRLAQMEQDL). Positions 245–460 (AAMFDAEYGR…RALSSLWASR (216 aa)) constitute a DOG1 domain.

This sequence belongs to the bZIP family.

The protein resides in the nucleus. Transcriptional regulator involved in defense response. The sequence is that of Transcription factor TGAL11 from Oryza sativa subsp. japonica (Rice).